A 183-amino-acid chain; its full sequence is Dual-action ribosomal maturation protein DarP (183 aa).

It belongs to the DarP family.

The protein localises to the cytoplasm. In terms of biological role, member of a network of 50S ribosomal subunit biogenesis factors which assembles along the 30S-50S interface, preventing incorrect 23S rRNA structures from forming. Promotes peptidyl transferase center (PTC) maturation. The protein is Dual-action ribosomal maturation protein DarP of Escherichia coli O7:K1 (strain IAI39 / ExPEC).